Consider the following 329-residue polypeptide: Cysteine synthase (329 aa).

N6-(pyridoxal phosphate)lysine is present on lysine 48. Residues asparagine 78, 183-187, and serine 278 each bind pyridoxal 5'-phosphate; that span reads GTGGT.

The protein belongs to the cysteine synthase/cystathionine beta-synthase family. Homodimer. It depends on pyridoxal 5'-phosphate as a cofactor.

The catalysed reaction is O-acetyl-L-serine + hydrogen sulfide = L-cysteine + acetate. The protein operates within amino-acid biosynthesis; L-cysteine biosynthesis; L-cysteine from L-serine: step 2/2. Functionally, catalyzes the conversion of O-acetylserine (OAS) to cysteine through the elimination of acetate and addition of hydrogen sulfide. In Synechococcus elongatus (strain ATCC 33912 / PCC 7942 / FACHB-805) (Anacystis nidulans R2), this protein is Cysteine synthase (srpG).